Here is a 122-residue protein sequence, read N- to C-terminus: Large ribosomal subunit protein eL8 (122 aa).

This sequence belongs to the eukaryotic ribosomal protein eL8 family. As to quaternary structure, part of the 50S ribosomal subunit. Probably part of the RNase P complex.

Its subcellular location is the cytoplasm. Functionally, multifunctional RNA-binding protein that recognizes the K-turn motif in ribosomal RNA, the RNA component of RNase P, box H/ACA, box C/D and box C'/D' sRNAs. In Methanothrix thermoacetophila (strain DSM 6194 / JCM 14653 / NBRC 101360 / PT) (Methanosaeta thermophila), this protein is Large ribosomal subunit protein eL8.